Reading from the N-terminus, the 813-residue chain is LPS-assembly protein LptD (813 aa).

The tract at residues 1 to 29 (MTEQRRSPNNRALPSPAPTSVPARARRAG) is disordered. The first 52 residues, 1 to 52 (MTEQRRSPNNRALPSPAPTSVPARARRAGGLHAGALRPLVLAMASLSAGAHA), serve as a signal peptide directing secretion.

The protein belongs to the LptD family. In terms of assembly, component of the lipopolysaccharide transport and assembly complex. Interacts with LptE and LptA.

It localises to the cell outer membrane. Functionally, together with LptE, is involved in the assembly of lipopolysaccharide (LPS) at the surface of the outer membrane. The polypeptide is LPS-assembly protein LptD (Cupriavidus necator (strain ATCC 17699 / DSM 428 / KCTC 22496 / NCIMB 10442 / H16 / Stanier 337) (Ralstonia eutropha)).